We begin with the raw amino-acid sequence, 442 residues long: Protein translocase subunit SecF (442 aa).

The disordered stretch occupies residues 1–39; the sequence is MASKAKTGRDDEATSAVELTEATESAVARTDGDSTTDTA. 6 consecutive transmembrane segments (helical) span residues 67–87, 187–207, 218–238, 243–263, 301–321, and 331–351; these read WFGVSGAIVAVAIASIVFRGF, ITKKAVIALVVFLVLVALYIT, AITAMLFDLTVTAGVYSLVGF, ATVIGLLTILGFSLYDTVIVF, LIGVLPVLALMLVAVWLLGVG, and LIGIIIGTYSSIFFATPLLVT. A disordered region spans residues 366 to 442; sequence VLKRRNSGSP…PTGKRNAGRR (77 aa). The span at 402 to 432 shows a compositional bias: low complexity; that stretch reads QASSQSAPRAAQGSSKPAPGARPVRPVGTRR. Residues 433 to 442 show a composition bias toward basic residues; sequence PTGKRNAGRR.

Belongs to the SecD/SecF family. SecF subfamily. As to quaternary structure, forms a complex with SecD. Part of the essential Sec protein translocation apparatus which comprises SecA, SecYEG and auxiliary proteins SecDF. Other proteins may also be involved.

It is found in the cell membrane. Functionally, part of the Sec protein translocase complex. Interacts with the SecYEG preprotein conducting channel. SecDF uses the proton motive force (PMF) to complete protein translocation after the ATP-dependent function of SecA. In Mycobacterium tuberculosis (strain CDC 1551 / Oshkosh), this protein is Protein translocase subunit SecF.